The primary structure comprises 599 residues: Adenine deaminase (599 aa).

Belongs to the metallo-dependent hydrolases superfamily. Adenine deaminase family. Mn(2+) serves as cofactor.

The catalysed reaction is adenine + H2O + H(+) = hypoxanthine + NH4(+). In Clostridium botulinum (strain ATCC 19397 / Type A), this protein is Adenine deaminase.